Here is a 348-residue protein sequence, read N- to C-terminus: Cuticle collagen rol-6 (348 aa).

The segment at 76-348 (GYGATGVQPP…SARRHRKFQL (273 aa)) is disordered. Gly residues predominate over residues 120-137 (PGGGFPDGPFPNGGGPRG). Triple-helical region regions lie at residues 152–178 (GPAG…DGKD), 196–258 (GPLG…DGER), 261–284 (GRPG…TGRD), and 288–323 (GQSG…PGKD). The span at 194-231 (PQGPLGPQGPNGAPGLRGMRGARGQPGRPGRDGNPGMP) shows a compositional bias: low complexity. Over residues 297 to 306 (GLQGYGGAAG) the composition is skewed to gly residues. Residues 322 to 338 (KDAEYCKCPGREGDAGR) are compositionally biased toward basic and acidic residues. Positions 339–348 (SARRHRKFQL) are enriched in basic residues.

This sequence belongs to the cuticular collagen family. As to quaternary structure, collagen polypeptide chains are complexed within the cuticle by disulfide bonds and other types of covalent cross-links. In terms of tissue distribution, localizes in stripes along the alae.

Functionally, nematode cuticles are composed largely of collagen-like proteins. The cuticle functions both as an exoskeleton and as a barrier to protect the worm from its environment. May play a role in cuticle remodeling in response to the environment. Involved in body morphogenesis. The protein is Cuticle collagen rol-6 (rol-6) of Caenorhabditis elegans.